We begin with the raw amino-acid sequence, 181 residues long: Shikimate kinase (181 aa).

23–28 (GTGKST) contributes to the ATP binding site. Residue serine 27 participates in Mg(2+) binding. Positions 45, 69, and 91 each coordinate substrate. Arginine 129 is a binding site for ATP. Arginine 148 provides a ligand contact to substrate.

The protein belongs to the shikimate kinase family. Monomer. Mg(2+) serves as cofactor.

Its subcellular location is the cytoplasm. It catalyses the reaction shikimate + ATP = 3-phosphoshikimate + ADP + H(+). It functions in the pathway metabolic intermediate biosynthesis; chorismate biosynthesis; chorismate from D-erythrose 4-phosphate and phosphoenolpyruvate: step 5/7. Catalyzes the specific phosphorylation of the 3-hydroxyl group of shikimic acid using ATP as a cosubstrate. This chain is Shikimate kinase, found in Geobacter sulfurreducens (strain ATCC 51573 / DSM 12127 / PCA).